A 702-amino-acid polypeptide reads, in one-letter code: SAGA complex subunit NGG1 (702 aa).

The span at 1–10 shows a compositional bias: basic residues; it reads MPRHGRRGKL. Disordered regions lie at residues 1–29 and 90–224; these read MPRH…PSKL and LRKI…VKNP. Composition is skewed to basic and acidic residues over residues 11 to 22 and 90 to 108; these read PKGEKLPKKEGG and LRKI…EKQE. Residues 109–125 show a composition bias toward polar residues; it reads TSNADGQHESSTATEET. S134 is subject to Phosphoserine. The segment covering 162–219 has biased composition (basic and acidic residues); that stretch reads MAKEEINEDKDLQVHRDQPREKRPFDSETENRATENENTQRPDNKKQKIDVDKMENDP. Phosphoserine is present on S407. T464 carries the post-translational modification Phosphothreonine. Positions 606 to 618 match the Nuclear localization signal motif; sequence KRIRVPKKRKKHH. Disordered regions lie at residues 611 to 636 and 672 to 702; these read PKKR…IAQQ and NESV…VELN. A compositionally biased stretch (polar residues) spans 620 to 636; the sequence is AASNNVNTGTTSQIAQQ. Residues 680-689 are compositionally biased toward acidic residues; that stretch reads DQEEDEDEAD.

It belongs to the NGG1 family. As to quaternary structure, component of the 1.8 MDa SAGA (Spt-Ada-Gcn5 acetyltransferase) complex, which is composed of 19 subunits TRA1, SPT7, TAF5, NGG1/ADA3, SGF73, SPT20/ADA5, SPT8, TAF12, TAF6, HFI1/ADA1, UBP8, GCN5, ADA2, SPT3, SGF29, TAF10, TAF9, SGF11 and SUS1. The SAGA complex is composed of 4 modules, namely the HAT (histone acetyltransferase) module (GCN5, ADA2, NGG1/ADA3 and SGF29), the DUB (deubiquitinating) module (UBP8, SGF11, SGF73 and SUS1), the core or TAF (TBP-associated factor) module (TAF5, TAF6, TAF9, TAF10 and TAF12), and the Tra1 or SPT (Suppressor of Ty) module (TRA1, HFI1/ADA1, SPT3, SPT7, SPT8 and SPT20/ADA5). The Tra1/SPT module binds activators, the core module recruits TBP (TATA-binding protein), the HAT module contains the histone H3 acetyltransferase GCN5, and the DUB module comprises the histone H2B deubiquitinase UBP8. Also identified in an altered form of SAGA, named SALSA (SAGA altered, Spt8 absent) or SLIK (SAGA-like) complex, which contains a C-terminal truncated form of SPT7 and is missing SPT8. However, it has been shown that the SAGA and SAGA-like SALSA/SLIK transcriptional coactivators are structurally and biochemically equivalent. Component of the 0.8 MDa ADA complex, a HAT complex distinct from SAGA, which at least consists of ADA2, NGG1/ADA3, AHC1, AHC2, SGF29 and GCN5. Identified in an Ada.spt complex with SPT7 and TRA1. Component of an ADA/GCN5 complex that consists of HFI1/ADA1, ADA2, NGG1/ADA3, SPT20/ADA5 and GCN5 and probably is a subcomplex of SAGA.

The protein localises to the nucleus. Component of the transcription coactivator SAGA complex. SAGA acts as a general cofactor required for essentially all RNA polymerase II transcription. At the promoters, SAGA is required for transcription pre-initiation complex (PIC) recruitment. It influences RNA polymerase II transcriptional activity through different activities such as TBP interaction (via core/TAF module) and promoter selectivity, interaction with transcription activators (via Tra1/SPT module), and chromatin modification through histone acetylation (via HAT module) and deubiquitination (via DUB module). SAGA preferentially acetylates histones H3 (to form H3K9ac, H3K14ac, H3K18ac and H3K23ac) and H2B and deubiquitinates histone H2B. SAGA interacts with DNA via upstream activating sequences (UASs). Also identified in a modified version of SAGA named SALSA or SLIK. The cleavage of SPT7 and the absence of the SPT8 subunit in SLIK neither drive any major conformational differences in its structure compared with SAGA, nor significantly affect HAT, DUB, or DNA-binding activities. Component of the ADA histone acetyltransferase complex, which preferentially acetylates nucleosomal histones H3 (to form H3K14ac and H3K18ac) and H2B. May be involved in response to DNA damage by genotoxic agents. In Saccharomyces cerevisiae (strain ATCC 204508 / S288c) (Baker's yeast), this protein is SAGA complex subunit NGG1 (NGG1).